The following is a 537-amino-acid chain: MLSTLQPPRSLSLLPLRRFQISKTIVSAASSKTIDTSVISPPQSQILTTRRSLLSGETTAVEIAKSYLSRIRLTEPQLKCFLHVSENVLKDAQEIDQRIAKGEELGPLAGVLIGVKDNICTQGMPSTAASRILEHYRPPFDATAVKKIKELGGIVVGKTNMDEFGMGSTTEASAFQVTANPWDLSRVPGGSSGGSAAAVAARQCMVSLGSDTGGSVRQPASFCGVVGLKPTYGRVSRFGLMAYASSLDVIGCFGSTVADAGMLLHAISGYDRFDSTSSKQDVPEFQSQFLSVDHFESKPLNGVKVGIIRETLEDGVDSGVRSATQEAASHLEALGCILTEVSLPSFSLGLPAYYVIASSESSSNLSRYDGVRYGNQVMAEELNKLYECSRGEGFGGEVKMRILMGTYALSAGYYDAYYKRAQQVRTLIRKDFKAALEQNDILISPAAPSAAYKIGEKKDDPLAMYAGDIMTVNVNLAGLPAMVLPCGLVEGGPSGLPVGLQMIGAAFDEEKLLKVGHIFEQTLKGSSFVPPLLANVA.

Catalysis depends on charge relay system residues K116 and S191. Residue S215 is the Acyl-ester intermediate of the active site.

The protein belongs to the amidase family. GatA subfamily. In terms of assembly, subunit of the heterotrimeric GatCAB amidotransferase (AdT) complex, composed of A, B and C subunits.

It localises to the mitochondrion. The protein resides in the plastid. Its subcellular location is the chloroplast stroma. It carries out the reaction L-glutamyl-tRNA(Gln) + L-glutamine + ATP + H2O = L-glutaminyl-tRNA(Gln) + L-glutamate + ADP + phosphate + H(+). Functionally, allows the formation of correctly charged Gln-tRNA(Gln) through the transamidation of misacylated Glu-tRNA(Gln) in chloroplasts and mitochondria. The reaction takes place in the presence of glutamine and ATP through an activated gamma-phospho-Glu-tRNA(Gln). The polypeptide is Glutamyl-tRNA(Gln) amidotransferase subunit A, chloroplastic/mitochondrial (Arabidopsis thaliana (Mouse-ear cress)).